Here is a 228-residue protein sequence, read N- to C-terminus: Ribonuclease H (228 aa).

An RNase H type-1 domain is found at 2–142 (GPMRTIVYAD…ADRLATLGRR (141 aa)). Mg(2+) is bound by residues D11, E49, D71, and D134.

Belongs to the RNase H family. As to quaternary structure, monomer. Mg(2+) serves as cofactor.

Its subcellular location is the cytoplasm. The enzyme catalyses Endonucleolytic cleavage to 5'-phosphomonoester.. In terms of biological role, endonuclease that specifically degrades the RNA of RNA-DNA hybrids. This Methylorubrum extorquens (strain PA1) (Methylobacterium extorquens) protein is Ribonuclease H.